A 426-amino-acid chain; its full sequence is Citrate synthase (426 aa).

Catalysis depends on residues His-314 and Asp-372.

It belongs to the citrate synthase family.

The catalysed reaction is oxaloacetate + acetyl-CoA + H2O = citrate + CoA + H(+). The protein operates within carbohydrate metabolism; tricarboxylic acid cycle; isocitrate from oxaloacetate: step 1/2. The protein is Citrate synthase (gltA) of Helicobacter pylori (strain J99 / ATCC 700824) (Campylobacter pylori J99).